The sequence spans 1314 residues: E3 ubiquitin-protein ligase RNF123 (1314 aa).

The residue at position 2 (Ala-2) is an N-acetylalanine. A B30.2/SPRY domain is found at Val-74 to Leu-254. Residue Ser-675 is modified to Phosphoserine. The residue at position 683 (Arg-683) is an Asymmetric dimethylarginine. Positions Trp-968–Trp-974 are interaction with NFKB1. Residues Cys-1254, Cys-1257, Cys-1269, His-1271, Cys-1274, Cys-1277, Cys-1288, and Cys-1291 each contribute to the Zn(2+) site. An RING-type zinc finger spans residues Cys-1254–Lys-1292.

As to quaternary structure, component of the KPC complex composed of RNF123/KPC1 and UBAC1/KPC2. Interacts with UBAC1 and CDKN1B via its N-terminal domain. Interacts with RIGI (via N-terminus) and IFIH1 (via N-terminus). Ubiquitinated, leading to its degradation. Deubiquitinated by USP19, thereby stimulating CDKN1B ubiquitin-dependent degradation.

The protein localises to the cytoplasm. It carries out the reaction S-ubiquitinyl-[E2 ubiquitin-conjugating enzyme]-L-cysteine + [acceptor protein]-L-lysine = [E2 ubiquitin-conjugating enzyme]-L-cysteine + N(6)-ubiquitinyl-[acceptor protein]-L-lysine.. It functions in the pathway protein modification; protein ubiquitination. In terms of biological role, catalytic subunit of the KPC complex that acts as E3 ubiquitin-protein ligase. Promotes the ubiquitination and proteasome-mediated degradation of CDKN1B which is the cyclin-dependent kinase inhibitor at the G0-G1 transition of the cell cycle. Also acts as a key regulator of the NF-kappa-B signaling by promoting maturation of the NFKB1 component of NF-kappa-B: acts by catalyzing ubiquitination of the NFKB1 p105 precursor, leading to limited proteasomal degradation of NFKB1 p105 and generation of the active NFKB1 p50 subunit. Also functions as an inhibitor of innate antiviral signaling mediated by RIGI and IFIH1 independently of its E3 ligase activity. Interacts with the N-terminal CARD domains of RIGI and IFIH1 and competes with the downstream adapter MAVS. The polypeptide is E3 ubiquitin-protein ligase RNF123 (Homo sapiens (Human)).